Reading from the N-terminus, the 469-residue chain is MQQNTVTLILVGVIIFLFISLFFYVIYSFVQKKKNRNFKQIKIQPKKNNKITPTSDQKLKADEFISIINKKREILNHQRADYLKIKETQESYQQLQEVISEYQKKLNLEKIKLIDQMEKEIKDNLNEKAVYYMINAMEQHAEDIISSKFSFTIKLENEGMKGKIIGKDGRNKRHFEQTTKTDLIIEPNMPAITISSPNPIRREKAKRTMEKLLETKNMDIAKISLFYKEVEEGFEQTCYEIGKDALENKLHIFDIDKKMYPIVGQLNFRTSYSQNVLLHCVEAAVLAANIAQKLNIDPIKAKKAAFFHDIGKAVDFEIDNDHVNSGVELAKKFNFEDYIINAIESHHNKVSPKTVYAALVKVVDKLSASRPGARFVSNDEYFKRIEELEKICKSFEGVSDAYVIKSGREIEVIIDPSLVSDDECKILIKDIKFKLEDSDLVNKQPIQITLIRKFTQSITTLGSASRLRT.

Residues 6–26 (VTLILVGVIIFLFISLFFYVI) form a helical membrane-spanning segment. Residues 149-209 (FSFTIKLENE…IRREKAKRTM (61 aa)) form the KH domain. The 94-residue stretch at 276–369 (VLLHCVEAAV…VKVVDKLSAS (94 aa)) folds into the HD domain.

Belongs to the RNase Y family.

Its subcellular location is the cell membrane. Its function is as follows. Endoribonuclease that initiates mRNA decay. The protein is Ribonuclease Y of Malacoplasma penetrans (strain HF-2) (Mycoplasma penetrans).